Consider the following 185-residue polypeptide: UPF0200 protein TON_1344 (185 aa).

7–14 (GMPGSGKS) serves as a coordination point for ATP.

It belongs to the UPF0200 family.

This is UPF0200 protein TON_1344 from Thermococcus onnurineus (strain NA1).